Reading from the N-terminus, the 1015-residue chain is DNA polymerase catalytic subunit (1015 aa).

It belongs to the DNA polymerase type-B family. As to quaternary structure, forms a complex with the major DNA-binding protein BALF2, the DNA polymerase processivity factor BMRF1, and the alkaline exonuclease BGLF5. Interacts with the putative helicase-primase complex composed of BBLF4, BSLF1 and BBLF2/3 proteins; these interactions may coordinate leading and lagging strand DNA synthesis at the replication fork.

It is found in the host nucleus. The enzyme catalyses DNA(n) + a 2'-deoxyribonucleoside 5'-triphosphate = DNA(n+1) + diphosphate. In terms of biological role, replicates viral genomic DNA in the late phase of lytic infection, producing long concatemeric DNA. The replication complex is composed of six viral proteins: the DNA polymerase, processivity factor, primase, primase-associated factor, helicase, and ssDNA-binding protein. The chain is DNA polymerase catalytic subunit from Homo sapiens (Human).